Reading from the N-terminus, the 330-residue chain is Delta-aminolevulinic acid dehydratase (330 aa).

Positions 122, 124, 131, and 132 each coordinate Zn(2+). Catalysis depends on lysine 199, which acts as the Schiff-base intermediate with substrate. Residue lysine 199 is modified to N6-succinyllysine. Arginine 209 is a 5-aminolevulinate binding site. The residue at position 215 (serine 215) is a Phosphoserine. Arginine 221 contacts 5-aminolevulinate. Cysteine 223 contacts Zn(2+). Lysine 252 (schiff-base intermediate with substrate) is an active-site residue. Residue lysine 252 is modified to N6-succinyllysine. 2 residues coordinate 5-aminolevulinate: serine 279 and tyrosine 318.

It belongs to the ALAD family. In terms of assembly, homooctamer; active form. Homohexamer; low activity form. Zn(2+) is required as a cofactor.

The protein resides in the cytoplasm. The protein localises to the cytosol. It carries out the reaction 2 5-aminolevulinate = porphobilinogen + 2 H2O + H(+). It participates in porphyrin-containing compound metabolism; protoporphyrin-IX biosynthesis; coproporphyrinogen-III from 5-aminolevulinate: step 1/4. Can alternate between a fully active homooctamer and a low-activity homohexamer. A bound magnesium ion may promote the assembly of the fully active homooctamer. The magnesium-binding site is absent in the low-activity homohexamer. Inhibited by compounds that favor the hexameric state. Inhibited by divalent lead ions. The lead ions partially displace the zinc cofactor. Catalyzes an early step in the biosynthesis of tetrapyrroles. Binds two molecules of 5-aminolevulinate per subunit, each at a distinct site, and catalyzes their condensation to form porphobilinogen. The protein is Delta-aminolevulinic acid dehydratase (Alad) of Mus musculus (Mouse).